The following is a 477-amino-acid chain: Ribulose bisphosphate carboxylase large chain (477 aa).

The propeptide occupies 1 to 2 (MS). Pro3 is subject to N-acetylproline. Position 14 is an N6,N6,N6-trimethyllysine (Lys14). Thr173 is a binding site for substrate. The active-site Proton acceptor is the Lys175. Substrate is bound at residue Lys177. Residues Lys201, Asp203, and Glu204 each coordinate Mg(2+). N6-carboxylysine is present on Lys201. His294 serves as the catalytic Proton acceptor. The substrate site is built by Arg295, His327, and Ser379.

Belongs to the RuBisCO large chain family. Type I subfamily. Heterohexadecamer of 8 large chains and 8 small chains; disulfide-linked. The disulfide link is formed within the large subunit homodimers. The cofactor is Mg(2+). The disulfide bond which can form in the large chain dimeric partners within the hexadecamer appears to be associated with oxidative stress and protein turnover.

It is found in the plastid. The protein localises to the chloroplast. The enzyme catalyses 2 (2R)-3-phosphoglycerate + 2 H(+) = D-ribulose 1,5-bisphosphate + CO2 + H2O. It carries out the reaction D-ribulose 1,5-bisphosphate + O2 = 2-phosphoglycolate + (2R)-3-phosphoglycerate + 2 H(+). Its function is as follows. RuBisCO catalyzes two reactions: the carboxylation of D-ribulose 1,5-bisphosphate, the primary event in carbon dioxide fixation, as well as the oxidative fragmentation of the pentose substrate in the photorespiration process. Both reactions occur simultaneously and in competition at the same active site. The chain is Ribulose bisphosphate carboxylase large chain from Gerbera jamesonii (Transvaal daisy).